Consider the following 420-residue polypeptide: Serine hydroxymethyltransferase (420 aa).

Residues Leu121 and Gly125 to Leu127 contribute to the (6S)-5,6,7,8-tetrahydrofolate site. The residue at position 230 (Lys230) is an N6-(pyridoxal phosphate)lysine. Ser355–Phe357 contacts (6S)-5,6,7,8-tetrahydrofolate.

The protein belongs to the SHMT family. In terms of assembly, homodimer. Requires pyridoxal 5'-phosphate as cofactor.

It localises to the cytoplasm. It carries out the reaction (6R)-5,10-methylene-5,6,7,8-tetrahydrofolate + glycine + H2O = (6S)-5,6,7,8-tetrahydrofolate + L-serine. Its pathway is one-carbon metabolism; tetrahydrofolate interconversion. The protein operates within amino-acid biosynthesis; glycine biosynthesis; glycine from L-serine: step 1/1. Functionally, catalyzes the reversible interconversion of serine and glycine with tetrahydrofolate (THF) serving as the one-carbon carrier. This reaction serves as the major source of one-carbon groups required for the biosynthesis of purines, thymidylate, methionine, and other important biomolecules. Also exhibits THF-independent aldolase activity toward beta-hydroxyamino acids, producing glycine and aldehydes, via a retro-aldol mechanism. This Streptococcus mutans serotype c (strain ATCC 700610 / UA159) protein is Serine hydroxymethyltransferase.